The primary structure comprises 169 residues: uncharacterized protein (169 aa).

A signal peptide spans 1–21; sequence MVPVARASLFTLACLLVSVCA.

In terms of tissue distribution, component of the acid-soluble and acid-insoluble organic matrix of calcified shell layers (at protein level).

Its subcellular location is the secreted. This is an uncharacterized protein from Haliotis asinina (Donkey's ear abalone).